A 144-amino-acid polypeptide reads, in one-letter code: Protein D (144 aa).

The chain is Protein D (D) from Escherichia coli.